We begin with the raw amino-acid sequence, 404 residues long: Deoxyguanosinetriphosphate triphosphohydrolase-like protein (404 aa).

The 149-residue stretch at 69-217 (RLTHSLEVAQ…AGIADDIAYD (149 aa)) folds into the HD domain.

The protein belongs to the dGTPase family. Type 2 subfamily.

The polypeptide is Deoxyguanosinetriphosphate triphosphohydrolase-like protein (Rhodopseudomonas palustris (strain BisB18)).